Consider the following 225-residue polypeptide: NAD(P)H-quinone oxidoreductase subunit K, chloroplastic (225 aa).

Cysteine 43, cysteine 44, cysteine 108, and cysteine 139 together coordinate [4Fe-4S] cluster.

It belongs to the complex I 20 kDa subunit family. In terms of assembly, NDH is composed of at least 16 different subunits, 5 of which are encoded in the nucleus. Requires [4Fe-4S] cluster as cofactor.

Its subcellular location is the plastid. The protein localises to the chloroplast thylakoid membrane. It carries out the reaction a plastoquinone + NADH + (n+1) H(+)(in) = a plastoquinol + NAD(+) + n H(+)(out). The enzyme catalyses a plastoquinone + NADPH + (n+1) H(+)(in) = a plastoquinol + NADP(+) + n H(+)(out). In terms of biological role, NDH shuttles electrons from NAD(P)H:plastoquinone, via FMN and iron-sulfur (Fe-S) centers, to quinones in the photosynthetic chain and possibly in a chloroplast respiratory chain. The immediate electron acceptor for the enzyme in this species is believed to be plastoquinone. Couples the redox reaction to proton translocation, and thus conserves the redox energy in a proton gradient. This chain is NAD(P)H-quinone oxidoreductase subunit K, chloroplastic, found in Lepidium virginicum (Virginia pepperweed).